Reading from the N-terminus, the 574-residue chain is DNA mismatch repair protein MutL (574 aa).

It belongs to the DNA mismatch repair MutL/HexB family.

Its function is as follows. This protein is involved in the repair of mismatches in DNA. It is required for dam-dependent methyl-directed DNA mismatch repair. May act as a 'molecular matchmaker', a protein that promotes the formation of a stable complex between two or more DNA-binding proteins in an ATP-dependent manner without itself being part of a final effector complex. The sequence is that of DNA mismatch repair protein MutL from Coxiella burnetii (strain Dugway 5J108-111).